Reading from the N-terminus, the 335-residue chain is UPF0353 protein Mvan_2751 (335 aa).

A run of 2 helical transmembrane segments spans residues 18 to 38 (WFFL…IVQM) and 67 to 87 (LPAV…AGPT). Residues 98–294 (VVMLVIDVSQ…EQLKQVFTNL (197 aa)) form the VWFA domain. The helical transmembrane segment at 309–329 (VGWLRIGSLVLALAALGALLI) threads the bilayer.

It belongs to the UPF0353 family.

The protein resides in the cell membrane. The protein is UPF0353 protein Mvan_2751 of Mycolicibacterium vanbaalenii (strain DSM 7251 / JCM 13017 / BCRC 16820 / KCTC 9966 / NRRL B-24157 / PYR-1) (Mycobacterium vanbaalenii).